A 65-amino-acid chain; its full sequence is Large ribosomal subunit protein bL35 (65 aa).

Positions Met1–Leu65 are disordered. Over residues Ala10–Leu44 the composition is skewed to basic residues. Over residues Val50–Leu65 the composition is skewed to basic and acidic residues.

Belongs to the bacterial ribosomal protein bL35 family.

This chain is Large ribosomal subunit protein bL35, found in Xylella fastidiosa (strain M23).